The chain runs to 416 residues: NADH-quinone oxidoreductase subunit H (416 aa).

A run of 9 helical transmembrane segments spans residues L16 to I36, P84 to I104, L124 to L144, V165 to T185, S197 to G217, V260 to L280, W288 to L308, F320 to A340, and W353 to W373.

It belongs to the complex I subunit 1 family. As to quaternary structure, NDH-1 is composed of 14 different subunits. Subunits NuoA, H, J, K, L, M, N constitute the membrane sector of the complex.

The protein localises to the cell membrane. The enzyme catalyses a quinone + NADH + 5 H(+)(in) = a quinol + NAD(+) + 4 H(+)(out). In terms of biological role, NDH-1 shuttles electrons from NADH, via FMN and iron-sulfur (Fe-S) centers, to quinones in the respiratory chain. The immediate electron acceptor for the enzyme in this species is believed to be menaquinone. Couples the redox reaction to proton translocation (for every two electrons transferred, four hydrogen ions are translocated across the cytoplasmic membrane), and thus conserves the redox energy in a proton gradient. This subunit may bind ubiquinone. The chain is NADH-quinone oxidoreductase subunit H from Mycobacterium sp. (strain JLS).